The chain runs to 382 residues: Bifunctional enzyme IspD/IspF (382 aa).

Residues 1–225 (MTFSVVIVAA…EHLAGVARVT (225 aa)) are 2-C-methyl-D-erythritol 4-phosphate cytidylyltransferase. Residues 226–382 (RVGQGFDAHR…SAVVAVETPA (157 aa)) form a 2-C-methyl-D-erythritol 2,4-cyclodiphosphate synthase region. Residues D232 and H234 each contribute to the a divalent metal cation site. 4-CDP-2-C-methyl-D-erythritol 2-phosphate is bound by residues 232–234 (DAH) and 258–259 (HS). H266 contributes to the a divalent metal cation binding site. 4-CDP-2-C-methyl-D-erythritol 2-phosphate contacts are provided by residues 280–282 (DIG), 356–359 (TTTE), F363, and R366.

It in the N-terminal section; belongs to the IspD/TarI cytidylyltransferase family. IspD subfamily. This sequence in the C-terminal section; belongs to the IspF family. The cofactor is a divalent metal cation.

It catalyses the reaction 2-C-methyl-D-erythritol 4-phosphate + CTP + H(+) = 4-CDP-2-C-methyl-D-erythritol + diphosphate. The enzyme catalyses 4-CDP-2-C-methyl-D-erythritol 2-phosphate = 2-C-methyl-D-erythritol 2,4-cyclic diphosphate + CMP. It functions in the pathway isoprenoid biosynthesis; isopentenyl diphosphate biosynthesis via DXP pathway; isopentenyl diphosphate from 1-deoxy-D-xylulose 5-phosphate: step 2/6. The protein operates within isoprenoid biosynthesis; isopentenyl diphosphate biosynthesis via DXP pathway; isopentenyl diphosphate from 1-deoxy-D-xylulose 5-phosphate: step 4/6. Its function is as follows. Bifunctional enzyme that catalyzes the formation of 4-diphosphocytidyl-2-C-methyl-D-erythritol from CTP and 2-C-methyl-D-erythritol 4-phosphate (MEP) (IspD), and catalyzes the conversion of 4-diphosphocytidyl-2-C-methyl-D-erythritol 2-phosphate (CDP-ME2P) to 2-C-methyl-D-erythritol 2,4-cyclodiphosphate (ME-CPP) with a corresponding release of cytidine 5-monophosphate (CMP) (IspF). This Caulobacter vibrioides (strain ATCC 19089 / CIP 103742 / CB 15) (Caulobacter crescentus) protein is Bifunctional enzyme IspD/IspF.